Reading from the N-terminus, the 72-residue chain is Multiple antibiotic resistance protein MarB (72 aa).

The polypeptide is Multiple antibiotic resistance protein MarB (marB) (Escherichia coli (strain K12)).